The primary structure comprises 97 residues: EVKLVESGGGLVKPGGSLKLSCAASGFTFSSYAMSWVRQTPEKRLEWVASISSGGSTYYPDSVKGRFTISRDNARNILYLQMSSLRSEDTAMYYCAR.

The Ig-like domain occupies 1-97 (EVKLVESGGG…EDTAMYYCAR (97 aa)).

The chain is Ig heavy chain V region 914 from Mus musculus (Mouse).